We begin with the raw amino-acid sequence, 122 residues long: Fluoride-specific ion channel FluC 2 (122 aa).

Transmembrane regions (helical) follow at residues 1 to 21 (MAWL…FLLS), 33 to 53 (PLGT…LLAL), 62 to 82 (VTLA…TFTY), and 102 to 122 (GSIL…GSLF). Na(+)-binding residues include Gly72 and Thr75.

The protein belongs to the fluoride channel Fluc/FEX (TC 1.A.43) family.

It is found in the cell membrane. It carries out the reaction fluoride(in) = fluoride(out). Its activity is regulated as follows. Na(+) is not transported, but it plays an essential structural role and its presence is essential for fluoride channel function. In terms of biological role, fluoride-specific ion channel. Important for reducing fluoride concentration in the cell, thus reducing its toxicity. The chain is Fluoride-specific ion channel FluC 2 from Moorella thermoacetica (strain ATCC 39073 / JCM 9320).